Reading from the N-terminus, the 213-residue chain is N-(5'-phosphoribosyl)anthranilate isomerase (213 aa).

The protein belongs to the TrpF family.

It catalyses the reaction N-(5-phospho-beta-D-ribosyl)anthranilate = 1-(2-carboxyphenylamino)-1-deoxy-D-ribulose 5-phosphate. Its pathway is amino-acid biosynthesis; L-tryptophan biosynthesis; L-tryptophan from chorismate: step 3/5. The chain is N-(5'-phosphoribosyl)anthranilate isomerase from Caulobacter sp. (strain K31).